Consider the following 287-residue polypeptide: Cell wall protein PIR5 (287 aa).

The first 21 residues, 1-21, serve as a signal peptide directing secretion; sequence MHYKKAFLASLLSSIALTAYA. Positions 22 to 62 are excised as a propeptide; that stretch reads PPEPWATLTPSSKMDGGTTEYRTSFGLAVIPFTVTESKVKR. 4 PIR1/2/3 repeats span residues 62-80, 81-99, 104-122, and 144-162; these read RNVI…TQKL, PHPV…TQKV, SHIV…TAKN, and ATAV…ISSA.

This sequence belongs to the PIR protein family. Post-translationally, covalently linked to beta-1,3-glucan of the inner cell wall layer via an alkali-sensitive ester linkage between the gamma-carboxyl group of glutamic acids, arising from specific glutamines within the PIR1/2/3 repeats, and hydroxyl groups of glucoses of beta-1,3-glucan chains.

Its subcellular location is the secreted. It localises to the cell wall. Its function is as follows. Component of the outer cell wall layer. May be involved in meiosis and sporulation. The chain is Cell wall protein PIR5 (PIR5) from Saccharomyces cerevisiae (strain YJM789) (Baker's yeast).